We begin with the raw amino-acid sequence, 140 residues long: Large ribosomal subunit protein uL14 (140 aa).

Ser17 is modified (phosphoserine). A Phosphotyrosine modification is found at Tyr38.

Belongs to the universal ribosomal protein uL14 family. In terms of assembly, component of the large ribosomal subunit.

It is found in the cytoplasm. Its function is as follows. Component of the large ribosomal subunit. The ribosome is a large ribonucleoprotein complex responsible for the synthesis of proteins in the cell. The sequence is that of Large ribosomal subunit protein uL14 (RPL23) from Pongo abelii (Sumatran orangutan).